Here is a 697-residue protein sequence, read N- to C-terminus: Probable potassium transporter 4 (697 aa).

The Cytoplasmic segment spans residues Met1 to Leu29. Residues Ile30–Val50 traverse the membrane as a helical segment. Over Tyr51 to Gly66 the chain is Extracellular. Asn55 carries N-linked (GlcNAc...) asparagine glycosylation. Residues Ile67–Ala87 form a helical membrane-spanning segment. Over Leu88 to Arg152 the chain is Cytoplasmic. The chain crosses the membrane as a helical span at residues Leu153–Pro173. The Extracellular segment spans residues Ala174–Pro189. A helical transmembrane segment spans residues Ser190 to Leu210. Residues Gln211 to Lys217 are Cytoplasmic-facing. A helical transmembrane segment spans residues Val218–Val238. Topologically, residues Tyr239 to Leu271 are extracellular. N-linked (GlcNAc...) asparagine glycosylation is present at Asn264. The helical transmembrane segment at Leu272–Phe292 threads the bilayer. Residues Ser293 to Ala300 lie on the Cytoplasmic side of the membrane. A helical transmembrane segment spans residues Phe301–Ile321. Over Asn322–Pro338 the chain is Extracellular. A helical membrane pass occupies residues Val339 to Ile359. At Ser360–Glu390 the chain is on the cytoplasmic side. The chain crosses the membrane as a helical span at residues Val391 to Phe411. Residues Gly412 to Gly422 are Extracellular-facing. Residues Val423–Ile443 form a helical membrane-spanning segment. Residues Trp444–His447 are Cytoplasmic-facing. A helical transmembrane segment spans residues Val448–Ala468. Residues Val469 to Arg475 are Extracellular-facing. Residues Gly476–Tyr496 traverse the membrane as a helical segment. Residues Gly497–Ala697 lie on the Cytoplasmic side of the membrane.

This sequence belongs to the HAK/KUP transporter (TC 2.A.72.3) family.

The protein localises to the membrane. Functionally, high-affinity potassium transporter. The chain is Probable potassium transporter 4 (HAK4) from Oryza sativa subsp. japonica (Rice).